The sequence spans 655 residues: MVLYTTPFPNSCLSALHAVSWALIFPCYWLVDRLLASFIPTTYEKRQRADDPCCLQLFCTVLFTPVYLALLVAALPFAFLGFIFWSPLQSARRPYSYSRLEDKNPAGGAALLSEWKGTGAGKSFCFATANVCLLPDSLARLNNVFNTQARAKEIGQRIRNGAARPQIKIYIDSPTNTSISAASFSSLVSPQGGDGSRAVPGSIKRTASVEYKGDGGRHPSDEAANGPASGEQADGSLEDSCIVRIGGEEGGRPQEADDPAAGSQARNGAGGTPKGQTPNHNQRDGDSGSLGSPSASRESLVKARAGQDSGGSGEPGANSKLLYKTSVVKKAAARRRRHPDEAFDHEVSAFFPANLDFLCLQEVFDKRAAAKLKEQLHGYFEYILYDVGVYGCHGCCNFKCLNSGLFFASRYPVMDVAYHCYPNGCSFDALASKGALFLKVQVGSTPQDQRIVGYIACTHLHAPPEDSAVRCEQLDLLQDWLADFRKSTSSTSTANPEELVVFDVICGDLNFDNCSSDDKLEQQHSLFTRYKDPCRLGPGEEKPWAIGTLLDTNGLYDEDVCTPDNLQKVLESEEGRREYLAFPTSKSPGAGQKGRKDLLKGNGRRIDYMLHAEEGLCPDWKAEVEEFSFITQLSGLTDHLPVAMRLMVSAGEEEA.

At M1–N10 the chain is on the cytoplasmic side. Positions S11–V31 form an intramembrane region, helical. Over D32–T64 the chain is Cytoplasmic. Residues C53, C54, and C59 are each lipidated (S-palmitoyl cysteine). The segment at residues P65 to W85 is an intramembrane region (helical). Over S86 to A655 the chain is Cytoplasmic. The residue at position 178 (S178) is a Phosphoserine. The segment at V209 to N318 is disordered. Basic and acidic residues-rich tracts occupy residues Y211–D221 and G246–E255. A Phosphoserine modification is found at S289. E362 is a Mg(2+) binding site. S-palmitoyl cysteine attachment occurs at residues C395 and C396. The Proton acceptor role is filled by H639.

It belongs to the neutral sphingomyelinase family. Requires Mg(2+) as cofactor. In terms of processing, palmitoylated, palmitoylation-deficient proteins are targeted for lysosomal degradation. As to expression, predominantly expressed in brain (at protein level).

It localises to the golgi apparatus membrane. The protein resides in the cell membrane. The catalysed reaction is a sphingomyelin + H2O = phosphocholine + an N-acylsphing-4-enine + H(+). It catalyses the reaction N-(15Z-tetracosenoyl)sphing-4-enine-1-phosphocholine + H2O = N-(15Z-tetracosenoyl)-sphing-4-enine + phosphocholine + H(+). It carries out the reaction N-(tetracosanoyl)-sphing-4-enine-1-phosphocholine + H2O = N-tetracosanoyl-sphing-4-enine + phosphocholine + H(+). The enzyme catalyses N-(hexadecanoyl)-sphing-4-enine-1-phosphocholine + H2O = N-hexadecanoylsphing-4-enine + phosphocholine + H(+). The catalysed reaction is an N-(acyl)-sphingosylphosphocholine + H2O = an N-acyl-sphingoid base + phosphocholine + H(+). It catalyses the reaction 1-hexadecanoyl-sn-glycero-3-phosphocholine + H2O = 1-hexadecanoyl-sn-glycerol + phosphocholine + H(+). It carries out the reaction 1-O-octadecyl-sn-glycero-3-phosphocholine + H2O = 1-O-octadecyl-sn-glycerol + phosphocholine + H(+). The enzyme catalyses a sphingosylphosphocholine + H2O = a sphingoid base + phosphocholine + H(+). It participates in lipid metabolism; sphingolipid metabolism. With respect to regulation, inhibited by nSMase inhibitor GW4869. Binding of anionic phospholipids (APLs) such as phosphatidylserine (PS) and phosphatidic acid (PA) increases enzymatic activity. In terms of biological role, catalyzes the hydrolysis of sphingomyelin to form ceramide and phosphocholine. Ceramide mediates numerous cellular functions, such as apoptosis and growth arrest, and is capable of regulating these 2 cellular events independently. Also hydrolyzes sphingosylphosphocholine. Regulates the cell cycle by acting as a growth suppressor in confluent cells. Probably acts as a regulator of postnatal development and participates in bone and dentin mineralization. Binds to anionic phospholipids (APLs) such as phosphatidylserine (PS) and phosphatidic acid (PA) that modulate enzymatic activity and subcellular location. May be involved in IL-1-beta-induced JNK activation in hepatocytes. May act as a mediator in transcriptional regulation of NOS2/iNOS via the NF-kappa-B activation under inflammatory conditions. This is Sphingomyelin phosphodiesterase 3 from Mus musculus (Mouse).